A 1871-amino-acid polypeptide reads, in one-letter code: Protein RRP5 homolog (1871 aa).

A disordered region spans residues 1-62; the sequence is MANLEESFPR…KTKKLKIEKR (62 aa). Alanine 2 is subject to N-acetylalanine. Serine 7 carries the phosphoserine modification. Residues 43-59 show a composition bias toward basic residues; that stretch reads KRKKSQKGPAKTKKLKI. 4 consecutive S1 motif domains span residues 83-171, 187-258, 281-346, and 365-436; these read GMRI…LSLN, GMLL…LSVG, GLVV…LSLR, and GAVL…LSLR. Position 438 is a phosphoserine (serine 438). S1 motif domains follow at residues 453-522, 542-611, 636-707, and 729-798; these read GAVV…MTLK, GLQT…LSFK, GQLV…LCRK, and GMLL…LSLR. Residues 998–1018 form a disordered region; it reads AAKRTMRPTQKDSETVDEDEE. Lysine 1030 is covalently cross-linked (Glycyl lysine isopeptide (Lys-Gly) (interchain with G-Cter in SUMO1)). S1 motif domains are found at residues 1036–1109, 1149–1222, 1230–1298, and 1324–1396; these read GDMV…ISHP, GQTV…LSLT, GEVA…LSLR, and GQLL…LSFL. A phosphoserine mark is found at serine 1360 and serine 1362. Disordered stretches follow at residues 1395 to 1531 and 1549 to 1586; these read FLPG…APRL and ALPP…KAEK. Lysine 1416 participates in a covalent cross-link: Glycyl lysine isopeptide (Lys-Gly) (interchain with G-Cter in SUMO2). 2 stretches are compositionally biased toward basic and acidic residues: residues 1416-1459 and 1469-1484; these read KQEE…EKQQ and GGRE…ERVS. A phosphoserine mark is found at serine 1476, serine 1493, and serine 1498. A compositionally biased stretch (basic and acidic residues) spans 1575–1586; that stretch reads KERELEKQKAEK. HAT repeat units follow at residues 1599–1631, 1705–1737, 1775–1807, and 1809–1844; these read GRQP…FHLQ, EKFQ…FLLR, GDAE…MTIK, and GSQK…YEKQ.

In terms of assembly, interacts with NF-kappa-B p50/NFKB1 and NF-kappa-B p65/RELA.

The protein resides in the nucleus. Its subcellular location is the nucleolus. Functionally, essential for the generation of mature 18S rRNA, specifically necessary for cleavages at sites A0, 1 and 2 of the 47S precursor. Directly interacts with U3 snoRNA. In terms of biological role, involved in the biogenesis of rRNA. The sequence is that of Protein RRP5 homolog (PDCD11) from Homo sapiens (Human).